A 622-amino-acid polypeptide reads, in one-letter code: Low affinity potassium transport system protein Kup (622 aa).

12 helical membrane passes run 9 to 29 (LPAITLAAIGVVYGDIGTSPL), 49 to 69 (VFGFLSLIFWLLIFVVSIKYL), 103 to 123 (VIMGLIGGSFFYGEVVITPAI), 137 to 157 (PQLDTWIVPLSIIVLTLLFMI), 165 to 185 (VGKLFAPIMLTWFLILAGLGL), 213 to 233 (VSFIALGAVVLSITGVEALYA), 247 to 267 (WFTVVLPSLTLNYFGQGALLL), 276 to 296 (PFFLLAPDWALIPLLIIAALA), 337 to 357 (IYIPFVNWMLYVAVVIVIVSF), 363 to 383 (LAAAYGIAVTGTMVLTSILST), 396 to 416 (FVALILIAFLCVDIPLFTANL), and 419 to 439 (LLSGGWLPLSLGTVMFIVMTT).

Belongs to the HAK/KUP transporter (TC 2.A.72) family.

The protein localises to the cell inner membrane. It carries out the reaction K(+)(in) + H(+)(in) = K(+)(out) + H(+)(out). Responsible for the low-affinity transport of potassium into the cell. Likely operates as a K(+):H(+) symporter. The protein is Low affinity potassium transport system protein Kup of Escherichia coli O157:H7.